Consider the following 342-residue polypeptide: Transmembrane protein 59-like (342 aa).

The N-terminal stretch at M1 to S24 is a signal peptide. N-linked (GlcNAc...) asparagine glycosylation occurs at N97. A helical membrane pass occupies residues W268–V290. Positions T340 to L342 match the Microbody targeting signal motif.

It belongs to the TMEM59 family. Expressed preferentially at high level in the brain.

It is found in the golgi apparatus membrane. Functionally, modulates the O-glycosylation and complex N-glycosylation steps occurring during the Golgi maturation of APP. Inhibits APP transport to the cell surface and further shedding. This is Transmembrane protein 59-like (TMEM59L) from Homo sapiens (Human).